A 435-amino-acid polypeptide reads, in one-letter code: 3-phosphoshikimate 1-carboxyvinyltransferase (435 aa).

3-phosphoshikimate contacts are provided by Lys-28, Ser-29, and Arg-33. Lys-28 serves as a coordination point for phosphoenolpyruvate. Gly-100 and Arg-128 together coordinate phosphoenolpyruvate. 3-phosphoshikimate-binding residues include Ser-173, Gln-175, Asp-321, and Lys-348. Gln-175 contributes to the phosphoenolpyruvate binding site. Asp-321 serves as the catalytic Proton acceptor. Phosphoenolpyruvate contacts are provided by Arg-352 and Arg-394.

This sequence belongs to the EPSP synthase family. As to quaternary structure, monomer.

It localises to the cytoplasm. It catalyses the reaction 3-phosphoshikimate + phosphoenolpyruvate = 5-O-(1-carboxyvinyl)-3-phosphoshikimate + phosphate. It functions in the pathway metabolic intermediate biosynthesis; chorismate biosynthesis; chorismate from D-erythrose 4-phosphate and phosphoenolpyruvate: step 6/7. In terms of biological role, catalyzes the transfer of the enolpyruvyl moiety of phosphoenolpyruvate (PEP) to the 5-hydroxyl of shikimate-3-phosphate (S3P) to produce enolpyruvyl shikimate-3-phosphate and inorganic phosphate. The chain is 3-phosphoshikimate 1-carboxyvinyltransferase from Desulfitobacterium hafniense (strain DSM 10664 / DCB-2).